Consider the following 549-residue polypeptide: MAAKDVRFSADARERLIRGVDLLANAVKVTLGPKGRNVVIEKSFGSPRITKDGVTVAKEIELADKFENMGAQMVREVASKTNDLAGDGTTTATVLAQAIVREGAKAVAAGMNPMDLKRGIDKAVNAIVDELKKRTKKITTPSETAQVGTISANGEAEIGKMISEAMQKVGNEGVITVEEAKGIQTELDVVEGMQFDRGYVSPYFITNPEKMVADLDNPYILIHEKKLSGLQPMLPLLESIVQSGKPLLIIAEDVEGEALATLVVNKLRGGLKIAAVKAPGFGDRRKAMLEDIAILTGGQVISEDLGIKLETVTLNMLGRAKKVLIEKENTTIVEGAGKKADITGRCNQIRAQIEETTSDYDREKLQERLAKLAGGVAVIRVGGASETEVKERKDRVDDALHATRAAVEEGIVPGGGVALARASLAINKLKADNDDQRFGIDIIRKAVLAPMRQIAENAGEDGAVISGKVLDNDDYSFGFDAQSGEFKDMVKAGIIDPTKVVRTALQDAASVAGLLITTEAMVAERPEKKAPAGGDAGMGGMGGMGGMDF.

ATP-binding positions include 30–33 (TLGP), lysine 51, 87–91 (DGTTT), glycine 415, and aspartate 496.

Belongs to the chaperonin (HSP60) family. As to quaternary structure, forms a cylinder of 14 subunits composed of two heptameric rings stacked back-to-back. Interacts with the co-chaperonin GroES.

The protein localises to the cytoplasm. The catalysed reaction is ATP + H2O + a folded polypeptide = ADP + phosphate + an unfolded polypeptide.. Functionally, together with its co-chaperonin GroES, plays an essential role in assisting protein folding. The GroEL-GroES system forms a nano-cage that allows encapsulation of the non-native substrate proteins and provides a physical environment optimized to promote and accelerate protein folding. The chain is Chaperonin GroEL from Acidiphilium cryptum (strain JF-5).